Here is a 130-residue protein sequence, read N- to C-terminus: Small ribosomal subunit protein uS8 (130 aa).

It belongs to the universal ribosomal protein uS8 family. Part of the 30S ribosomal subunit.

One of the primary rRNA binding proteins, it binds directly to 16S rRNA central domain where it helps coordinate assembly of the platform of the 30S subunit. The chain is Small ribosomal subunit protein uS8 from Methanopyrus kandleri (strain AV19 / DSM 6324 / JCM 9639 / NBRC 100938).